The primary structure comprises 259 residues: HTH-type quorum sensing-dependent transcriptional regulator VjbR (259 aa).

Residues 76 to 179 (KNYFAIDPVF…AGIIHGTVCG (104 aa)) form a C12-HSL binding region. The HTH luxR-type domain occupies 183-248 (ANSVASLLTP…SAVATALSLG (66 aa)). A DNA-binding region (H-T-H motif) is located at residues 207-226 (DGEIAEILSIARWTVVTYLQ).

Transcriptional regulator involved in the global control of Brucella gene expression. Mediates the effects of the quorum sensing autoinducer C12-HSL (N-dodecanoyl-homoserine lactone) on a large and diverse number of genes. This chain is HTH-type quorum sensing-dependent transcriptional regulator VjbR (vjbR), found in Brucella suis biovar 1 (strain 1330).